The following is a 433-amino-acid chain: E3 ubiquitin-protein ligase RGLG5 (433 aa).

Residues 1-61 (MGGSSSKESP…SYNSGRQTPK (61 aa)) form a disordered region. The N-myristoyl glycine moiety is linked to residue G2. Low complexity predominate over residues 22–39 (SVSGSSSYSSAWDQSSYY). Residues 40 to 61 (QTPNHPSASPVSSYNSGRQTPK) are compositionally biased toward polar residues. The VWFA domain occupies 93–313 (NLIVGIDVTK…KEAEFALSAL (221 aa)). Residues 340–383 (IALPPPTYATQSMRNSPRTSRSTSFQNKPYDNGVSSTPPSTTHN) are disordered. A compositionally biased stretch (polar residues) spans 347-383 (YATQSMRNSPRTSRSTSFQNKPYDNGVSSTPPSTTHN). The RING-type zinc finger occupies 390–423 (CPVCLVSAKNMAFNCGHQTCAGCGEDLHVCPICR).

In terms of assembly, interacts with PP2CA. In terms of processing, N-myristoylated.

The protein resides in the cell membrane. The catalysed reaction is S-ubiquitinyl-[E2 ubiquitin-conjugating enzyme]-L-cysteine + [acceptor protein]-L-lysine = [E2 ubiquitin-conjugating enzyme]-L-cysteine + N(6)-ubiquitinyl-[acceptor protein]-L-lysine.. Together with RGLG1, mediates the ubiquitination and subsequent proteasomal degradation of the target protein PP2CA. Functions as a positive regulator of abscisic acid (ABA) signaling through ABA-dependent degradation of PP2CA, a major inhibitor of ABA signaling. This Arabidopsis thaliana (Mouse-ear cress) protein is E3 ubiquitin-protein ligase RGLG5.